The sequence spans 117 residues: Large ribosomal subunit protein bL19 (117 aa).

It belongs to the bacterial ribosomal protein bL19 family.

In terms of biological role, this protein is located at the 30S-50S ribosomal subunit interface and may play a role in the structure and function of the aminoacyl-tRNA binding site. This Aliivibrio fischeri (strain ATCC 700601 / ES114) (Vibrio fischeri) protein is Large ribosomal subunit protein bL19.